The primary structure comprises 4138 residues: Fumosorinone synthetase (4138 aa).

Residues 15-455 (PEPIAIVGSA…GTNAHAIIER (441 aa)) enclose the Ketosynthase family 3 (KS3) domain. Residues Cys-189, His-328, and His-375 each act as for beta-ketoacyl synthase activity in the active site. The tract at residues 590 to 921 (VFTGQGAQWP…APDAVSFSTA (332 aa)) is malonyl-CoA:ACP transacylase (MAT) domain. The N-terminal hotdog fold stretch occupies residues 990 to 1133 (HELLGRRAVD…GLIDVHLGPR (144 aa)). The interval 990-1306 (HELLGRRAVD…GFEVRSVGER (317 aa)) is dehydratase (DH) domain. Residues 990–1309 (HELLGRRAVD…VRSVGERDAA (320 aa)) form the PKS/mFAS DH domain. Residue His-1022 is the Proton acceptor; for dehydratase activity of the active site. The C-terminal hotdog fold stretch occupies residues 1157-1309 (LQEIDCEKLY…VRSVGERDAA (153 aa)). Asp-1216 functions as the Proton donor; for dehydratase activity in the catalytic mechanism. Residues 1456 to 1650 (RFYAEDKGMQ…FSGADHVAHD (195 aa)) are methyltransferase (MT) domain. The tract at residues 2205–2379 (TYLMVGAAGG…AASIIHVGFV (175 aa)) is ketoreductase (KR) domain. Residues 2507–2587 (EAAAAVRRAF…QLSTLAAKLA (81 aa)) form the Carrier 1 domain. At Ser-2547 the chain carries O-(pantetheine 4'-phosphoryl)serine. The disordered stretch occupies residues 2587 to 2683 (ARQQSPRKEG…TEPKTEDKVS (97 aa)). The segment covering 2610 to 2621 (TQDKLVDDKEQK) has biased composition (basic and acidic residues). Polar residues predominate over residues 2622–2643 (VQVTSSLAKADSLTQEMQASAH). Over residues 2647–2659 (DSATNPTPSSTAS) the composition is skewed to low complexity. Residues 2664–2675 (SNSQSTRSTSTE) are compositionally biased toward polar residues. The condensation (C) domain stretch occupies residues 2701 to 3128 (REAPMSAAQA…ASQRVRECAV (428 aa)). The segment at 3162-3564 (CQKNSARTAI…DGTLLCFGRI (403 aa)) is adenylation (A) (KR) domain. The region spanning 3680 to 3759 (EKMTIQEGEL…GMTRCVLAQR (80 aa)) is the Carrier 2 domain. Ser-3719 carries the post-translational modification O-(pantetheine 4'-phosphoryl)serine. The reductase (RED) domain stretch occupies residues 3813 to 4045 (LTGATGFLGG…LDFGTVDAVV (233 aa)).

This sequence in the C-terminal section; belongs to the NRP synthetase family.

In terms of biological role, hybrid PKS-NRPS synthetase; part of the gene cluster that mediates the biosynthesis of fumosorinone, a 2-pyridone alkaloid that acts as an inhibitor of protein tyrosine phosphatase 1B which is implicated asa negative regulator of insulin receptor signaling and a potential drug target for the treatment of type II diabetes and other associated metabolic syndromes. The polyketide-amino acid backbone of fumosorinone is first assembled by the PKS-NRPS hybrid fumoS. The PKS modules condense one acetyl-CoA starter unit with 7 malonyl-CoA units, programmed C-methylations occurring after the first 3 and the sixth extensions, and cycles of full reduction occurring after the first 2 extensions. Because fumoS lacks a designated enoyl reductase (ER) domain, the required activity is provided the enoyl reductase fumoC. Upon formation of the polyketide backbone on the thiotemplate, the polyketide is transferred to the NRPS module and linked to tyrosine to produce the acyltetramic acid intermediate called prefumosorinone A. The cytochrome P450 monooxygenase fumoA then probably catalyzes an unprecedented oxidative ring expansion of prefumosorinone A to form prefumosorinone B which contains the 2-pyridone core of fumosorinone. The cytochrome P450 monooxygenase fumoB might hydroxylate the nitrogen of prefumosorinone B, but not the acyltetramic acid prefumosorinone A, to form fumosorinone. The sequence is that of Fumosorinone synthetase from Cordyceps fumosorosea (strain ARSEF 2679) (Isaria fumosorosea).